We begin with the raw amino-acid sequence, 263 residues long: Elongin-A (263 aa).

Disordered regions lie at residues 112–147 (KLEQ…YCPK) and 170–263 (SATS…PKRI). Polar residues-rich tracts occupy residues 186–206 (RSSS…NTYP) and 214–229 (SFTS…VKTQ). The segment covering 230–245 (PSSSSSPSISRPTSFP) has biased composition (low complexity). Over residues 253 to 263 (SRFSSQVPKRI) the composition is skewed to polar residues.

It belongs to the ELA1 family. Heterodimer with elc1. Component of a CRL3 E3 ubiquitin ligase complex consisting of a cullin, the linker protein elc1, the substrate receptor pof4/ela1, and the RING protein rbx1. Interacts with skp1.

Its function is as follows. As part of the CRL3 E3 ubiquitin ligase complex; polyubiquitylates monoubiquitylated RNA polymerase II subunit rpb1 to trigger its proteolysis; plays a role in global genomic repair. This is Elongin-A (pof4) from Schizosaccharomyces pombe (strain 972 / ATCC 24843) (Fission yeast).